We begin with the raw amino-acid sequence, 660 residues long: Probable cation-transporting P-type ATPase J (660 aa).

The next 5 membrane-spanning stretches (helical) occupy residues Trp-33 to Pro-53, Leu-60 to Leu-80, Ala-94 to Phe-114, Ile-261 to Leu-281, and Met-292 to Ile-312. Residue Asp-340 is the 4-aspartylphosphate intermediate of the active site. Residues Asp-544 and Asp-548 each contribute to the Mg(2+) site. Residues Ile-598–Leu-618 form a helical membrane-spanning segment.

The protein belongs to the cation transport ATPase (P-type) (TC 3.A.3) family. Type IB subfamily.

The protein resides in the cell membrane. It carries out the reaction ATP + H2O = ADP + phosphate + H(+). The sequence is that of Probable cation-transporting P-type ATPase J (ctpJ) from Mycobacterium tuberculosis (strain CDC 1551 / Oshkosh).